The following is a 493-amino-acid chain: Amino acid permease 2 (493 aa).

Topologically, residues 1-49 (MGETAAANNHRHHHHHGHQVFDVASHDFVPPQPAFKCFDDDGRLKRTGT) are cytoplasmic. A run of 2 helical transmembrane segments spans residues 50–70 (VWTA…LSLA) and 71–91 (WAIA…FSLV). Residues 92–138 (TLYSSTLLSDCYRTGDAVSGKRNYTYMDAVRSILGGFKFKICGLIQY) lie on the Cytoplasmic side of the membrane. A helical membrane pass occupies residues 139–159 (LNLFGIAIGYTIAASISMMAI). At 160–175 (KRSNCFHKSGGKDPCH) the chain is on the extracellular side. A helical membrane pass occupies residues 176–196 (MSSNPYMIVFGVAEILLSQVP). At 197–200 (DFDQ) the chain is on the cytoplasmic side. The helical transmembrane segment at 201-221 (IWWISIVAAVMSFTYSAIGLA) threads the bilayer. Residues 222-253 (LGIVQVAANGVFKGSLTGISIGTVTQTQKIWR) are Extracellular-facing. The helical transmembrane segment at 254 to 274 (TFQALGDIAFAYSYSVVLIEI) threads the bilayer. The Cytoplasmic segment spans residues 275 to 293 (QDTVRSPPAESKTMKKATK). The helical transmembrane segment at 294-314 (ISIAVTTIFYMLCGSMGYAAF) threads the bilayer. Topologically, residues 315 to 340 (GDAAPGNLLTGFGFYNPFWLLDIANA) are extracellular. The helical transmembrane segment at 341–361 (AIVVHLVGAYQVFAQPIFAFI) threads the bilayer. Residues 362–396 (EKSVAERYPDNDFLSKEFEIRIPGFKSPYKVNVFR) are Cytoplasmic-facing. A helical transmembrane segment spans residues 397–417 (MVYRSGFVVTTTVISMLMPFF). Residues 418-419 (ND) are Extracellular-facing. A helical membrane pass occupies residues 420 to 440 (VVGILGALGFWPLTVYFPVEM). The Cytoplasmic portion of the chain corresponds to 441-458 (YIKQRKVEKWSTRWVCLQ). Residues 459–479 (MLSVACLVISVVAGVGSIAGV) traverse the membrane as a helical segment. Topologically, residues 480–493 (MLDLKVYKPFKSTY) are extracellular.

The protein belongs to the amino acid/polyamine transporter 2 family. Amino acid/auxin permease (AAAP) (TC 2.A.18.2) subfamily. Highly expressed in developing pods. Found in the vascular strands of siliques, cotyledons, leaves and roots, in the inner phloem of stems, and in the funiculi. Lower levels of expression in flowers. Not expressed in seeds.

It is found in the cell membrane. With respect to regulation, inhibited by diethylpyrocarbonate (DEPC). Functionally, amino acid-proton symporter. Stereospecific transporter with a broad specificity for histidine, arginine, glutamate and neutral amino acids, favoring small amino acids such as alanine, asparagine and glutamine. Also accepts large aromatic residues such as phenlalanine or tyrosine. Has a much higher affinity for basic amino acids as compared with AAP1. May function in xylem-to-phloem transfer and in uptake of amino acids assimilated in the green silique tissue. In Arabidopsis thaliana (Mouse-ear cress), this protein is Amino acid permease 2 (AAP2).